A 1146-amino-acid chain; its full sequence is Reverse gyrase 1 (1146 aa).

An RG N-terminal-type zinc finger spans residues 1 to 38 (MIKAIFDTLCPNCGGEISAERLLKGLPCEKCLPEEVNR). Cys-10, Cys-13, Cys-28, and Cys-31 together coordinate Zn(2+). ATP is bound by residues Gln-79 and 96 to 103 (APTGVGKT). Residues 83-240 (ARKVFLGRSF…RLKEKPNKSE (158 aa)) form the Helicase ATP-binding domain. Residues 197–200 (DDVD) carry the DEAD box motif. Residues 412-565 (HLLWALLSLR…FKKIEEVDLK (154 aa)) enclose the Helicase C-terminal domain. The topoisomerase I stretch occupies residues 592 to 1146 (EHVKPVLVVV…KVNEFEKANV (555 aa)). Residues 596 to 728 (PVLVVVESPN…NVERIEFHEV (133 aa)) form the Toprim domain. Residues Glu-602 and Asp-697 each contribute to the Mg(2+) site. The region spanning 744–1142 (NENLVKAQLV…ELYKKVNEFE (399 aa)) is the Topo IA-type catalytic domain. The active-site O-(5'-phospho-DNA)-tyrosine intermediate is Tyr-891.

In the N-terminal section; belongs to the DEAD box helicase family. DDVD subfamily. The protein in the C-terminal section; belongs to the type IA topoisomerase family. In terms of assembly, monomer. Zn(2+) is required as a cofactor. The cofactor is Mg(2+).

It localises to the cytoplasm. The catalysed reaction is ATP + H2O = ADP + phosphate + H(+). Its function is as follows. Modifies the topological state of DNA by introducing positive supercoils in an ATP-dependent process, increasing the linking number in steps of +1. Binds to single-stranded DNA, transiently cleaves and then rejoins the ends, introducing a positive supercoil in the process. The scissile phosphodiester is attacked by the catalytic tyrosine of the enzyme, resulting in the formation of a DNA-(5'-phosphotyrosyl)-enzyme intermediate. Probably involved in rewinding DNA strands in regions of the chromosome that have opened up to allow replication, transcription, DNA repair and/or for DNA protection. This Aquifex aeolicus (strain VF5) protein is Reverse gyrase 1.